A 372-amino-acid chain; its full sequence is tRNA-specific 2-thiouridylase MnmA (372 aa).

ATP contacts are provided by residues G11 to S18 and M36. Residues N106–D108 form an interaction with target base in tRNA region. The active-site Nucleophile is the C111. The cysteines at positions 111 and 204 are disulfide-linked. Residue G136 participates in ATP binding. The interval K154–Q156 is interaction with tRNA. C204 serves as the catalytic Cysteine persulfide intermediate. Residues R311–Y312 are interaction with tRNA.

Belongs to the MnmA/TRMU family.

The protein resides in the cytoplasm. The enzyme catalyses S-sulfanyl-L-cysteinyl-[protein] + uridine(34) in tRNA + AH2 + ATP = 2-thiouridine(34) in tRNA + L-cysteinyl-[protein] + A + AMP + diphosphate + H(+). Its function is as follows. Catalyzes the 2-thiolation of uridine at the wobble position (U34) of tRNA, leading to the formation of s(2)U34. The chain is tRNA-specific 2-thiouridylase MnmA from Mycoplasmopsis synoviae (strain 53) (Mycoplasma synoviae).